A 190-amino-acid chain; its full sequence is Threonylcarbamoyl-AMP synthase (190 aa).

The YrdC-like domain occupies 7 to 190 (NFVLADIVRA…ALTGKRFRQG (184 aa)).

This sequence belongs to the SUA5 family. TsaC subfamily.

It is found in the cytoplasm. It carries out the reaction L-threonine + hydrogencarbonate + ATP = L-threonylcarbamoyladenylate + diphosphate + H2O. Required for the formation of a threonylcarbamoyl group on adenosine at position 37 (t(6)A37) in tRNAs that read codons beginning with adenine. Catalyzes the conversion of L-threonine, HCO(3)(-)/CO(2) and ATP to give threonylcarbamoyl-AMP (TC-AMP) as the acyladenylate intermediate, with the release of diphosphate. The protein is Threonylcarbamoyl-AMP synthase of Yersinia pestis bv. Antiqua (strain Angola).